Reading from the N-terminus, the 93-residue chain is uncharacterized protein (93 aa).

Positions 1 to 22 (MSIPNLSSVTQLLSIATGLVST) are cleaved as a signal peptide. N5 carries N-linked (GlcNAc...) asparagine; by host glycosylation.

This is an uncharacterized protein from Invertebrate iridescent virus 6 (IIV-6).